We begin with the raw amino-acid sequence, 815 residues long: Heme-copper oxidase subunit I+III (815 aa).

The tract at residues 1–467 (MVSRLRGFLA…QLSTLGAFIF (467 aa)) is COX1. Residues 26–46 (LLYLVTSIAFLLIAGSLALLF) form a helical membrane-spanning segment. Fe(II)-heme a is bound at residue histidine 70. 18 consecutive transmembrane segments (helical) span residues 71–91 (GLIM…NYIV), 105–125 (LNAL…ASFF), 157–177 (LAIF…LVTI), 197–217 (ILFT…GGAL), 242–262 (LFWF…LGAM), 281–301 (LTAF…HMFI), 314–334 (ITTI…IFTL), 339–359 (LVYT…IIGG), 380–400 (VVAH…IAGL), 419–439 (IHFA…FALM), 463–483 (GAFI…YSLV), 580–600 (ALFG…VFLL), 637–657 (WVFI…YFFI), 683–703 (LINT…YLGV), 708–728 (YLIT…FLTV), 736–756 (LLIA…YVTT), 758–778 (AHAL…VKLF), and 791–811 (VLAV…VFPL). Residues histidine 248, tyrosine 252, histidine 297, and histidine 298 each contribute to the Cu cation site. The 1'-histidyl-3'-tyrosine (His-Tyr) cross-link spans 248 to 252 (HPEVY). Residue histidine 383 coordinates heme a3. Fe(II)-heme a is bound at residue histidine 385. The segment at 545-815 (DVSNVPLSGG…TLVFPLYYLV (271 aa)) is COX3.

The protein in the N-terminal section; belongs to the heme-copper respiratory oxidase family. It in the C-terminal section; belongs to the cytochrome c oxidase subunit 3 family. Heme serves as cofactor. Requires Cu cation as cofactor.

Its subcellular location is the cell membrane. The chain is Heme-copper oxidase subunit I+III (aoxB) from Aeropyrum pernix (strain ATCC 700893 / DSM 11879 / JCM 9820 / NBRC 100138 / K1).